The primary structure comprises 463 residues: L-seryl-tRNA(Sec) selenium transferase (463 aa).

At K295 the chain carries N6-(pyridoxal phosphate)lysine.

The protein belongs to the SelA family. As to quaternary structure, homodecamer; pentamer of dimers. Binds only one seryl-tRNA(Sec) per dimer. Pyridoxal 5'-phosphate serves as cofactor.

It localises to the cytoplasm. The catalysed reaction is L-seryl-tRNA(Sec) + selenophosphate + H(+) = L-selenocysteinyl-tRNA(Sec) + phosphate. Its pathway is aminoacyl-tRNA biosynthesis; selenocysteinyl-tRNA(Sec) biosynthesis; selenocysteinyl-tRNA(Sec) from L-seryl-tRNA(Sec) (bacterial route): step 1/1. Functionally, converts seryl-tRNA(Sec) to selenocysteinyl-tRNA(Sec) required for selenoprotein biosynthesis. This is L-seryl-tRNA(Sec) selenium transferase from Escherichia coli O139:H28 (strain E24377A / ETEC).